We begin with the raw amino-acid sequence, 75 residues long: UPF0346 protein LSL_0716 (75 aa).

Belongs to the UPF0346 family.

This chain is UPF0346 protein LSL_0716, found in Ligilactobacillus salivarius (strain UCC118) (Lactobacillus salivarius).